A 434-amino-acid polypeptide reads, in one-letter code: MSRPSYASATKTYFHNRLVTGPDRAYFIVAMILMLIPEIPFLIFVCPLFEEWITAAIYPVSIYFWIASYIFLIQTAYTDPGIIPRGIYNDDIFAPDHRQPLFKKITVKDTKQEIKWCETCCLYRPPRANHCGICNNCVERFDHHCPWVGNCIGRRNYQTFLYFLYSLGFLCIWIMGFCVAHICIESARYRDNHPSASSAKVFQEGMNKSHYISDYNYSLWVSRFNSNPYRKSAFANFIEAFCPPRYPSFYKYTLDHEKELTTIPTPNNINGNNNNSINNNNNNNNNNNNNNNNNNNNNNNNNNINNGNSGGTTNNGYTPPISPPQMLQRQSSTIRYSLDNLRTSSNSSLGNFNNLKSSRDLNLSTISEDKPKNLSNSNNNNNTNNKNTSEDNNHSSGSDFGGDEENNEDDFKSDNDKEINSSSLSLNHELQVNV.

Transmembrane regions (helical) follow at residues 25 to 45 (AYFI…LIFV) and 53 to 73 (ITAA…IFLI). The DHHC domain maps to 115–165 (KWCETCCLYRPPRANHCGICNNCVERFDHHCPWVGNCIGRRNYQTFLYFLY). Catalysis depends on Cys145, which acts as the S-palmitoyl cysteine intermediate. A helical membrane pass occupies residues 160–180 (FLYFLYSLGFLCIWIMGFCVA). N-linked (GlcNAc...) asparagine glycosylation is found at Asn207, Asn216, Asn274, Asn346, Asn362, Asn373, Asn381, Asn387, and Asn393. A disordered region spans residues 262–330 (TIPTPNNING…ISPPQMLQRQ (69 aa)). A compositionally biased stretch (low complexity) spans 267 to 316 (NNINGNNNNSINNNNNNNNNNNNNNNNNNNNNNNNNNINNGNSGGTTNNG). Positions 365 to 434 (TISEDKPKNL…SLNHELQVNV (70 aa)) are disordered. Over residues 373–387 (NLSNSNNNNNTNNKN) the composition is skewed to low complexity. Positions 409-419 (DDFKSDNDKEI) are enriched in basic and acidic residues. Asn420 is a glycosylation site (N-linked (GlcNAc...) asparagine). Over residues 420 to 434 (NSSSLSLNHELQVNV) the composition is skewed to polar residues.

The protein belongs to the DHHC palmitoyltransferase family.

Its subcellular location is the membrane. The catalysed reaction is L-cysteinyl-[protein] + hexadecanoyl-CoA = S-hexadecanoyl-L-cysteinyl-[protein] + CoA. In Dictyostelium discoideum (Social amoeba), this protein is Putative ZDHHC-type palmitoyltransferase 1.